We begin with the raw amino-acid sequence, 352 residues long: Protein RecA (352 aa).

67-74 (GPESSGKT) provides a ligand contact to ATP.

This sequence belongs to the RecA family.

Its subcellular location is the cytoplasm. Can catalyze the hydrolysis of ATP in the presence of single-stranded DNA, the ATP-dependent uptake of single-stranded DNA by duplex DNA, and the ATP-dependent hybridization of homologous single-stranded DNAs. It interacts with LexA causing its activation and leading to its autocatalytic cleavage. In Klebsiella pneumoniae subsp. pneumoniae (strain ATCC 700721 / MGH 78578), this protein is Protein RecA.